We begin with the raw amino-acid sequence, 86 residues long: Heat shock factor-binding protein (86 aa).

Residues 34 to 63 (MSDSIITKIDDMGGRINELEQSINDLRAEM) are a coiled coil. Residues 42 to 52 (IDDMGGRINEL) are required for interactions with heat shock factors (HSFs). Residues 59–86 (LRAEMGVEGTPPPASKSGDEPKTPASSS) form a disordered region.

It belongs to the HSBP1 family. In terms of assembly, homohexamer. Interacts with HSFA1A, HSFA1B and HSFA2. Mostly expressed in siliques and flowers, and, to a lower extent, in roots, stems and leaves.

It localises to the nucleus. It is found in the cytoplasm. Its subcellular location is the cytosol. In terms of biological role, negative regulator of the heat shock (HS) response. Affects negatively HSFA1B DNA-binding capacity in vitro. Involved in acquired thermotolerance but not basal thermotolerance. Crucial for seed development, after fertilization and during embryogenesis. The polypeptide is Heat shock factor-binding protein (Arabidopsis thaliana (Mouse-ear cress)).